The chain runs to 122 residues: MARIAGVNIPTNKRVVIALQYIHGIGPKKAEEITEKVGIPAERRVNQLTDAEVLQIREAIDRDYVVEGDLRREVAMNIKRLMDLGCYRGLRHRRNLPVRGQRTHTNARTRKGKAKPIAGKKK.

The tract at residues 95-122 (NLPVRGQRTHTNARTRKGKAKPIAGKKK) is disordered.

Belongs to the universal ribosomal protein uS13 family. Part of the 30S ribosomal subunit. Forms a loose heterodimer with protein S19. Forms two bridges to the 50S subunit in the 70S ribosome.

In terms of biological role, located at the top of the head of the 30S subunit, it contacts several helices of the 16S rRNA. In the 70S ribosome it contacts the 23S rRNA (bridge B1a) and protein L5 of the 50S subunit (bridge B1b), connecting the 2 subunits; these bridges are implicated in subunit movement. Contacts the tRNAs in the A and P-sites. The protein is Small ribosomal subunit protein uS13 of Methylobacterium sp. (strain 4-46).